The sequence spans 292 residues: ATP synthase gamma chain (292 aa).

Belongs to the ATPase gamma chain family. As to quaternary structure, F-type ATPases have 2 components, CF(1) - the catalytic core - and CF(0) - the membrane proton channel. CF(1) has five subunits: alpha(3), beta(3), gamma(1), delta(1), epsilon(1). CF(0) has three main subunits: a, b and c.

It localises to the cell inner membrane. In terms of biological role, produces ATP from ADP in the presence of a proton gradient across the membrane. The gamma chain is believed to be important in regulating ATPase activity and the flow of protons through the CF(0) complex. The chain is ATP synthase gamma chain from Nautilia profundicola (strain ATCC BAA-1463 / DSM 18972 / AmH).